Here is a 572-residue protein sequence, read N- to C-terminus: Methionine--tRNA ligase (572 aa).

Positions 11 to 21 (PYINGIKHLGN) match the 'HIGH' region motif. Residues Cys-143, Cys-146, Cys-156, and Cys-159 each contribute to the Zn(2+) site. The 'KMSKS' region motif lies at 346 to 350 (QFSTS). Thr-349 contacts ATP.

It belongs to the class-I aminoacyl-tRNA synthetase family. MetG type 1 subfamily. As to quaternary structure, monomer. Requires Zn(2+) as cofactor.

Its subcellular location is the cytoplasm. The enzyme catalyses tRNA(Met) + L-methionine + ATP = L-methionyl-tRNA(Met) + AMP + diphosphate. Is required not only for elongation of protein synthesis but also for the initiation of all mRNA translation through initiator tRNA(fMet) aminoacylation. The protein is Methionine--tRNA ligase of Paracoccus denitrificans (strain Pd 1222).